The chain runs to 306 residues: Homeobox protein HMX3 (306 aa).

The interval 95–181 is disordered; that stretch reads HTPRTEVPDK…DKKPCRKKKT (87 aa). 2 stretches are compositionally biased toward basic and acidic residues: residues 117 to 143 and 153 to 174; these read GERD…KSPE and EEGK…PDKK. Residues 178-237 constitute a DNA-binding region (homeobox); that stretch reads KKKTRTVFSRSQVFQLESTFDMKRYLSSSERAGLAASLHLTETQVKIWFQNRRNKWKRQL.

Belongs to the HMX homeobox family.

It is found in the nucleus. Transcription factor involved in specification of neuronal cell types and which is required for inner ear and hypothalamus development. Binds to the 5'-CAAGTG-3' core sequence. May act as a stage-specific inhibitor of anf1 in the anterior neural plate during the development. This chain is Homeobox protein HMX3 (hmx3), found in Xenopus tropicalis (Western clawed frog).